The following is a 317-amino-acid chain: Putative carboxypeptidase RP402 (317 aa).

Serine 125 serves as the catalytic Nucleophile. Catalysis depends on charge relay system residues glutamate 225 and histidine 288.

It belongs to the peptidase S66 family.

The polypeptide is Putative carboxypeptidase RP402 (Rickettsia prowazekii (strain Madrid E)).